Consider the following 208-residue polypeptide: Small ribosomal subunit protein uS4 (208 aa).

The S4 RNA-binding domain maps to 98 to 160; the sequence is QRLDNVVYRM…SKNNSQIVRA (63 aa).

The protein belongs to the universal ribosomal protein uS4 family. As to quaternary structure, part of the 30S ribosomal subunit. Contacts protein S5. The interaction surface between S4 and S5 is involved in control of translational fidelity.

Functionally, one of the primary rRNA binding proteins, it binds directly to 16S rRNA where it nucleates assembly of the body of the 30S subunit. With S5 and S12 plays an important role in translational accuracy. The polypeptide is Small ribosomal subunit protein uS4 (Sulfurimonas denitrificans (strain ATCC 33889 / DSM 1251) (Thiomicrospira denitrificans (strain ATCC 33889 / DSM 1251))).